A 304-amino-acid polypeptide reads, in one-letter code: Porphobilinogen deaminase (304 aa).

At cysteine 241 the chain carries S-(dipyrrolylmethanemethyl)cysteine.

The protein belongs to the HMBS family. As to quaternary structure, monomer. It depends on dipyrromethane as a cofactor.

It catalyses the reaction 4 porphobilinogen + H2O = hydroxymethylbilane + 4 NH4(+). The protein operates within porphyrin-containing compound metabolism; protoporphyrin-IX biosynthesis; coproporphyrinogen-III from 5-aminolevulinate: step 2/4. In terms of biological role, tetrapolymerization of the monopyrrole PBG into the hydroxymethylbilane pre-uroporphyrinogen in several discrete steps. In Ruthia magnifica subsp. Calyptogena magnifica, this protein is Porphobilinogen deaminase.